Consider the following 1054-residue polypeptide: Desmoglein-1 (1054 aa).

Positions 1–23 (MNWHFLRTATVLLIFLVVVEINS) are cleaved as a signal peptide. Residues 24-49 (EFRIQVRDYNTKNGTIKWHSIRRQKR) constitute a propeptide that is removed on maturation. 3 N-linked (GlcNAc...) asparagine glycosylation sites follow: Asn36, Asn110, and Asn180. 4 Cadherin domains span residues 50 to 157 (EWIK…PPVF), 158 to 269 (SMST…IPYM), 270 to 389 (EPSS…RPGS), and 386 to 493 (RPGS…KDSE). At 50–566 (EWIKFAAACR…NLSDNVHFGP (517 aa)) the chain is on the extracellular side. Positions 487 to 554 (GWEKDSEKVT…QSNNNHQELG (68 aa)) are disordered. The segment covering 496 to 507 (TSSQNSGSSTGD) has biased composition (low complexity). Gly residues predominate over residues 508–517 (SSGGTGGGGR). The segment covering 523-534 (GDTTTNTGGKTS) has biased composition (low complexity). The segment covering 542-554 (TQTQSNNNHQELG) has biased composition (polar residues). Asn557 carries N-linked (GlcNAc...) asparagine glycosylation. The helical transmembrane segment at 567-587 (AGIGLLIMGFLVLGLVPFLLM) threads the bilayer. Over 588-1054 (CCDCGGAPGA…TKYSTVQYTK (467 aa)) the chain is Cytoplasmic. 5 Desmoglein repeat repeats span residues 830-856 (TYPS…TVTE), 857-886 (SYTT…ERVV), 887-916 (GPIS…ERVI), 917-944 (APSS…ERVI), and 945-973 (RPAS…ERVV). The segment at 1018–1040 (GHVRSSSDHHFSQTLGSASPSTA) is disordered. Polar residues predominate over residues 1029–1040 (SQTLGSASPSTA).

In terms of assembly, binds to JUP/plakoglobin. Interacts with PKP2. Interacts with DSC3; there is evidence to suggest that the interaction promotes cell-cell adhesion of keratinocytes.

The protein resides in the cell membrane. Its subcellular location is the cell junction. It is found in the desmosome. The protein localises to the cytoplasm. It localises to the nucleus. Its function is as follows. Component of intercellular desmosome junctions. Involved in the interaction of plaque proteins and intermediate filaments mediating cell-cell adhesion. The protein is Desmoglein-1 (DSG1) of Canis lupus familiaris (Dog).